The following is a 437-amino-acid chain: Protein translocase subunit SecY (437 aa).

The next 10 helical transmembrane spans lie at 19–39 (LFTL…IPGV), 69–89 (LLQI…SIIL), 122–142 (VALA…GALF), 157–177 (IFTT…VMWL), 189–209 (GMSI…LWAI), 219–239 (WIEF…VVFV), 275–295 (GVIP…IVQF), 318–338 (HIIL…AISF), 378–398 (GSLY…GFGA), and 400–420 (QNFP…LETV).

This sequence belongs to the SecY/SEC61-alpha family. In terms of assembly, component of the Sec protein translocase complex. Heterotrimer consisting of SecY, SecE and SecG subunits. The heterotrimers can form oligomers, although 1 heterotrimer is thought to be able to translocate proteins. Interacts with the ribosome. Interacts with SecDF, and other proteins may be involved. Interacts with SecA.

The protein resides in the cell membrane. Its function is as follows. The central subunit of the protein translocation channel SecYEG. Consists of two halves formed by TMs 1-5 and 6-10. These two domains form a lateral gate at the front which open onto the bilayer between TMs 2 and 7, and are clamped together by SecE at the back. The channel is closed by both a pore ring composed of hydrophobic SecY resides and a short helix (helix 2A) on the extracellular side of the membrane which forms a plug. The plug probably moves laterally to allow the channel to open. The ring and the pore may move independently. The chain is Protein translocase subunit SecY from Streptomyces lividans.